Reading from the N-terminus, the 200-residue chain is Thymidine kinase (200 aa).

ATP-binding positions include 9 to 16 (STMNAGKS) and 88 to 91 (DEAH). Glutamate 89 functions as the Proton acceptor in the catalytic mechanism. Zn(2+) contacts are provided by cysteine 146, cysteine 148, cysteine 183, and histidine 186.

Belongs to the thymidine kinase family. Homotetramer.

The protein localises to the cytoplasm. The catalysed reaction is thymidine + ATP = dTMP + ADP + H(+). The chain is Thymidine kinase from Rhizobium etli (strain ATCC 51251 / DSM 11541 / JCM 21823 / NBRC 15573 / CFN 42).